Here is a 259-residue protein sequence, read N- to C-terminus: Tryptophan synthase alpha chain (259 aa).

Residues Glu-35 and Asp-46 each act as proton acceptor in the active site.

The protein belongs to the TrpA family. Tetramer of two alpha and two beta chains.

It carries out the reaction (1S,2R)-1-C-(indol-3-yl)glycerol 3-phosphate + L-serine = D-glyceraldehyde 3-phosphate + L-tryptophan + H2O. It participates in amino-acid biosynthesis; L-tryptophan biosynthesis; L-tryptophan from chorismate: step 5/5. In terms of biological role, the alpha subunit is responsible for the aldol cleavage of indoleglycerol phosphate to indole and glyceraldehyde 3-phosphate. This chain is Tryptophan synthase alpha chain, found in Methanococcus maripaludis (strain C5 / ATCC BAA-1333).